The primary structure comprises 213 residues: Neuromodulin (213 aa).

The tract at residues 1-213 (MLCCIRRTKP…AEEAGKDQNV (213 aa)) is disordered. Residues Cys-3 and Cys-4 are each lipidated (S-palmitoyl cysteine). The segment covering 9–33 (KPVEKNEEADQEIKQDGTKPEENAH) has biased composition (basic and acidic residues). The IQ domain maps to 32–61 (AHKAATKIQASFRGHITRKKMKDEDKDGEN). Acidic residues predominate over residues 57 to 73 (KDGENDTAPDESAETEE). Residues 74 to 86 (KEERVSPSEEKPV) show a composition bias toward basic and acidic residues. The span at 102 to 122 (PNSPAAEAPPTAATDSAPSDT) shows a compositional bias: low complexity. Residues 157 to 169 (EKEEEEEEEEEEE) are compositionally biased toward acidic residues. Residues 191-213 (QTDKKEALDDSKPAEEAGKDQNV) show a composition bias toward basic and acidic residues.

Belongs to the neuromodulin family. As to quaternary structure, binds calmodulin with a greater affinity in the absence of Ca(2+) than in its presence. Palmitoylated. Palmitoylation is essential for plasma membrane association.

It is found in the cell membrane. The protein resides in the cell projection. The protein localises to the growth cone membrane. It localises to the synapse. Its subcellular location is the filopodium membrane. Its function is as follows. This protein is associated with nerve growth. It is a major component of the motile 'growth cones' that form the tips of elongating axons. Plays a role in axonal and dendritic filopodia induction. The chain is Neuromodulin (gap43) from Carassius auratus (Goldfish).